Here is a 344-residue protein sequence, read N- to C-terminus: Glucan endo-1,3-beta-glucosidase (344 aa).

The N-terminal stretch at 1–27 (MALTRNRPFVVVLLLGFVIMSTITIGA) is a signal peptide. Glutamate 123 (proton donor) is an active-site residue. The Nucleophile role is filled by glutamate 268.

Belongs to the glycosyl hydrolase 17 family.

It carries out the reaction Hydrolysis of (1-&gt;3)-beta-D-glucosidic linkages in (1-&gt;3)-beta-D-glucans.. Functionally, implicated in the defense of plants against pathogens. In Vitis vinifera (Grape), this protein is Glucan endo-1,3-beta-glucosidase.